A 211-amino-acid chain; its full sequence is Glutathione S-transferase (211 aa).

Positions 3 to 87 (DNIVLYYFDA…YLSKKYNICG (85 aa)) constitute a GST N-terminal domain. Glutathione contacts are provided by residues 58–59 (QV), 71–72 (QS), Asp-105, Lys-117, and Thr-121. In terms of domain architecture, GST C-terminal spans 89–211 (SELNEFYADM…YITNRKESVY (123 aa)).

This sequence belongs to the GST superfamily. In terms of assembly, homodimer. In the absence of ligands two homodimers may interact to form a tetramer.

The catalysed reaction is RX + glutathione = an S-substituted glutathione + a halide anion + H(+). Inhibited by chloroquine, cibacron blue, ferriprotoporphyrin IX (hemin) and S-hexylglutathione. Conjugation of reduced glutathione to a wide number of exogenous and endogenous hydrophobic electrophiles. May also function as a storage protein or ligandin for parasitotoxic ferriprotoporphyrin IX (hemin). The chain is Glutathione S-transferase from Plasmodium falciparum (isolate 3D7).